A 475-amino-acid polypeptide reads, in one-letter code: Ribulose bisphosphate carboxylase large chain (475 aa).

Residues 1–2 (MS) constitute a propeptide that is removed on maturation. Residue Pro3 is modified to N-acetylproline. Lys14 carries the post-translational modification N6,N6,N6-trimethyllysine. The substrate site is built by Asn123 and Thr173. Lys175 acts as the Proton acceptor in catalysis. Lys177 serves as a coordination point for substrate. 3 residues coordinate Mg(2+): Lys201, Asp203, and Glu204. Lys201 bears the N6-carboxylysine mark. The Proton acceptor role is filled by His294. 3 residues coordinate substrate: Arg295, His327, and Ser379.

Belongs to the RuBisCO large chain family. Type I subfamily. In terms of assembly, heterohexadecamer of 8 large chains and 8 small chains; disulfide-linked. The disulfide link is formed within the large subunit homodimers. The cofactor is Mg(2+). In terms of processing, the disulfide bond which can form in the large chain dimeric partners within the hexadecamer appears to be associated with oxidative stress and protein turnover.

Its subcellular location is the plastid. It localises to the chloroplast. The enzyme catalyses 2 (2R)-3-phosphoglycerate + 2 H(+) = D-ribulose 1,5-bisphosphate + CO2 + H2O. The catalysed reaction is D-ribulose 1,5-bisphosphate + O2 = 2-phosphoglycolate + (2R)-3-phosphoglycerate + 2 H(+). Its function is as follows. RuBisCO catalyzes two reactions: the carboxylation of D-ribulose 1,5-bisphosphate, the primary event in carbon dioxide fixation, as well as the oxidative fragmentation of the pentose substrate in the photorespiration process. Both reactions occur simultaneously and in competition at the same active site. The protein is Ribulose bisphosphate carboxylase large chain of Equisetum arvense (Field horsetail).